Consider the following 138-residue polypeptide: 1,4-dihydroxy-2-naphthoyl-CoA hydrolase (138 aa).

Aspartate 16 is an active-site residue.

It belongs to the 4-hydroxybenzoyl-CoA thioesterase family. DHNA-CoA hydrolase subfamily.

It catalyses the reaction 1,4-dihydroxy-2-naphthoyl-CoA + H2O = 1,4-dihydroxy-2-naphthoate + CoA + H(+). Its pathway is cofactor biosynthesis; phylloquinone biosynthesis. The protein operates within quinol/quinone metabolism; 1,4-dihydroxy-2-naphthoate biosynthesis; 1,4-dihydroxy-2-naphthoate from chorismate: step 7/7. Its function is as follows. Catalyzes the specific hydrolysis of 1,4-dihydroxy-2-naphthoyl-CoA (DHNA-CoA) to 1,4-dihydroxy-2-naphthoate (DHNA), a reaction involved in phylloquinone (vitamin K1) biosynthesis. Is not active on benzoyl-CoA, phenylacetyl-CoA and aliphatic acyl-CoA thioesters. This is 1,4-dihydroxy-2-naphthoyl-CoA hydrolase from Synechocystis sp. (strain ATCC 27184 / PCC 6803 / Kazusa).